A 184-amino-acid polypeptide reads, in one-letter code: Photosystem I assembly protein Ycf4 (184 aa).

2 helical membrane-spanning segments follow: residues 21 to 43 (NFCWACILFLGSLGFLLVGTSSY) and 58 to 80 (IFFPQGIVMSFYGIAGLFISSYL).

It belongs to the Ycf4 family.

It is found in the plastid. The protein resides in the chloroplast thylakoid membrane. Its function is as follows. Seems to be required for the assembly of the photosystem I complex. This Calycanthus floridus var. glaucus (Eastern sweetshrub) protein is Photosystem I assembly protein Ycf4.